The following is a 227-amino-acid chain: MELVFIRHGQSEWNAKNLFTGWRDVKLSEQGLAEAAAAGKKLKENGYEFDIAFTSVLTRAIKTCNIVLEESDQLFVPQIKTWRLNERHYGQLQGLDKKQTAEKYGDEQVRIWRRSYDTLPPLLDKDDEFSAHKDRRYAHLPADVVPDGENLKVTLERVLPFWEDQIAPAILSGKRVLVAAHGNSLRALAKHIEGISDEDIMGLEIPTGQPLVYKLDDNLKVLEKFYL.

Substrate contacts are provided by residues 7-14 (RHGQSEWN), 20-21 (TG), R59, 86-89 (ERHY), K97, 113-114 (RR), and 182-183 (GN). The active-site Tele-phosphohistidine intermediate is the H8. E86 serves as the catalytic Proton donor/acceptor.

Belongs to the phosphoglycerate mutase family. BPG-dependent PGAM subfamily. In terms of assembly, homodimer.

The catalysed reaction is (2R)-2-phosphoglycerate = (2R)-3-phosphoglycerate. The protein operates within carbohydrate degradation; glycolysis; pyruvate from D-glyceraldehyde 3-phosphate: step 3/5. Its function is as follows. Catalyzes the interconversion of 2-phosphoglycerate and 3-phosphoglycerate. The protein is 2,3-bisphosphoglycerate-dependent phosphoglycerate mutase of Neisseria meningitidis serogroup C (strain 053442).